A 201-amino-acid chain; its full sequence is Protein CIMAP1C (201 aa).

The stretch at 171–186 (PAPTMSSRSGHTSPAR) is one STPGR repeat. Positions 172-201 (APTMSSRSGHTSPARLLSPWASSTRPTYAR) are disordered. The span at 191–201 (WASSTRPTYAR) shows a compositional bias: polar residues.

Belongs to the CIMAP family.

In Bos taurus (Bovine), this protein is Protein CIMAP1C (CIMAP1C).